A 252-amino-acid polypeptide reads, in one-letter code: Trans-aconitate 2-methyltransferase (252 aa).

It belongs to the methyltransferase superfamily. Tam family.

The protein localises to the cytoplasm. The catalysed reaction is trans-aconitate + S-adenosyl-L-methionine = (E)-3-(methoxycarbonyl)pent-2-enedioate + S-adenosyl-L-homocysteine. In terms of biological role, catalyzes the S-adenosylmethionine monomethyl esterification of trans-aconitate. The protein is Trans-aconitate 2-methyltransferase of Escherichia coli (strain UTI89 / UPEC).